A 297-amino-acid chain; its full sequence is N-acetylmuramic acid 6-phosphate etherase (297 aa).

In terms of domain architecture, SIS spans 55 to 218 (AAAALKSGGR…STGAMVKFGK (164 aa)). The Proton donor role is filled by glutamate 83. Glutamate 114 is an active-site residue.

It belongs to the GCKR-like family. MurNAc-6-P etherase subfamily. Homodimer.

It catalyses the reaction N-acetyl-D-muramate 6-phosphate + H2O = N-acetyl-D-glucosamine 6-phosphate + (R)-lactate. It functions in the pathway amino-sugar metabolism; 1,6-anhydro-N-acetylmuramate degradation. It participates in amino-sugar metabolism; N-acetylmuramate degradation. Its pathway is cell wall biogenesis; peptidoglycan recycling. Its function is as follows. Specifically catalyzes the cleavage of the D-lactyl ether substituent of MurNAc 6-phosphate, producing GlcNAc 6-phosphate and D-lactate. Together with AnmK, is also required for the utilization of anhydro-N-acetylmuramic acid (anhMurNAc) either imported from the medium or derived from its own cell wall murein, and thus plays a role in cell wall recycling. This Salmonella schwarzengrund (strain CVM19633) protein is N-acetylmuramic acid 6-phosphate etherase.